We begin with the raw amino-acid sequence, 141 residues long: MNARGLGSELKDSIPVTELSASGPFESHDLLRKGFSCVKNELLPSHPLELSEKNFQLNQDKMNFSTLRNIQGLFAPLKLQMEFKAVQQVQRLPFLSSSNLSLDVLRGNDETIGFEDILNDPSQSEVMGEPHLMVEYKLGLL.

Residue K39 forms a Glycyl lysine isopeptide (Lys-Gly) (interchain with G-Cter in SUMO2) linkage. The High-affinity association with the preproteasome signature appears at 68 to 72 (RNIQG).

It belongs to the POMP/UMP1 family. Constituent of preproteasomes, but not of mature 20S proteasomes. Within the preproteasome, may directly interact with PSMB1/beta6, PSMB4/beta7, PSMB5/beta5, PSMB6/beta1 and PSMB9/beta1i. Interaction with PSMB8/beta5i has been observed in PubMed:10973495, but not in PubMed:10926487. Forms tetramers. Strongly expressed from the basal layer to the granular layer of healthy epidermis, whereas in KLICK patients there is a gradual decrease of expression toward the granular layer.

It localises to the cytoplasm. Its subcellular location is the cytosol. The protein resides in the nucleus. The protein localises to the microsome membrane. In terms of biological role, molecular chaperone essential for the assembly of standard proteasomes and immunoproteasomes. Degraded after completion of proteasome maturation. Mediates the association of 20S preproteasome with the endoplasmic reticulum. The chain is Proteasome maturation protein from Homo sapiens (Human).